A 287-amino-acid polypeptide reads, in one-letter code: Putative daunorubicin C-13 ketoreductase DnrU (287 aa).

24-30 (GATSGIG) contributes to the NADP(+) binding site. Ser-149 contacts substrate. Tyr-175 (proton acceptor) is an active-site residue.

The protein belongs to the short-chain dehydrogenases/reductases (SDR) family.

Functionally, could reduce the 13-carbonyl of daunorubicin to produce (13S)-13-dihydrodaunorubicin. Could also be able to reduce the 13-carbonyl of doxorubicin. The chain is Putative daunorubicin C-13 ketoreductase DnrU from Streptomyces sp. (strain C5).